Here is a 184-residue protein sequence, read N- to C-terminus: Exosome complex protein LRP1 (184 aa).

Positions 157–184 (DSTDHIRKASSKKSKRLDKVGKKKGGKK) are disordered. Residues 164–184 (KASSKKSKRLDKVGKKKGGKK) are compositionally biased toward basic residues.

This sequence belongs to the C1D family. As to quaternary structure, associates with nuclear form of the RNA exosome complex. Interacts with RRP4, RRP6, RRP45 and RRP46.

Its subcellular location is the nucleus. Required for exosome-dependent processing of pre-rRNA and small nucleolar RNA (snRNA) precursors. Involved in processing of 35S pre-rRNA at the A0, A1 and A2 sites. Required for activity of RRP6 in 7S pre-rRNA processing. Also has a role in 3'-processing of U4 and U5 small nuclear RNAs (snRNAs). Acts as a mRNA export factor. Mediates mRNA degradation upon UV irradiation. Maintains genome integrity where it is involved in both non-homologous end joining (NHEJ) and homologous recombination pathway repair of double strand DNA breaks. During NHEJ, required for joining 3'-overhanging ends. Also involved in telomere length regulation and maintenance. In Saccharomyces cerevisiae (strain ATCC 204508 / S288c) (Baker's yeast), this protein is Exosome complex protein LRP1 (LRP1).